Reading from the N-terminus, the 490-residue chain is GTPase Der (490 aa).

2 consecutive EngA-type G domains span residues 3-166 and 203-376; these read PVVA…MDDV and IKLA…DSST. GTP contacts are provided by residues 9–16, 56–60, 118–121, 209–216, 256–260, and 321–324; these read GRPNVGKS, DTGGI, NKTD, DTAGV, and NKWD. In terms of domain architecture, KH-like spans 377 to 461; that stretch reads RRVSTAMLTR…PIRIQFKEGE (85 aa).

This sequence belongs to the TRAFAC class TrmE-Era-EngA-EngB-Septin-like GTPase superfamily. EngA (Der) GTPase family. As to quaternary structure, associates with the 50S ribosomal subunit.

GTPase that plays an essential role in the late steps of ribosome biogenesis. The protein is GTPase Der of Salmonella enteritidis PT4 (strain P125109).